The following is a 485-amino-acid chain: Glutamyl-tRNA(Gln) amidotransferase subunit A (485 aa).

Active-site charge relay system residues include K79 and S154. S178 acts as the Acyl-ester intermediate in catalysis.

It belongs to the amidase family. GatA subfamily. As to quaternary structure, heterotrimer of A, B and C subunits.

It catalyses the reaction L-glutamyl-tRNA(Gln) + L-glutamine + ATP + H2O = L-glutaminyl-tRNA(Gln) + L-glutamate + ADP + phosphate + H(+). Allows the formation of correctly charged Gln-tRNA(Gln) through the transamidation of misacylated Glu-tRNA(Gln) in organisms which lack glutaminyl-tRNA synthetase. The reaction takes place in the presence of glutamine and ATP through an activated gamma-phospho-Glu-tRNA(Gln). The chain is Glutamyl-tRNA(Gln) amidotransferase subunit A from Clostridium botulinum (strain Langeland / NCTC 10281 / Type F).